A 485-amino-acid polypeptide reads, in one-letter code: MTITPQHLIALLPLLIVGLTVVVVMLSIAWRRNHFLNATLSVIGLNAALVSLWFVGQAGAMDVTPLMRVDGFAMLYTGLVQVASLATCTFAYPWLEGYNDNQEEFYLLVLIASLGGILLANANHLAALFLGIELISLPLFGLIGYAFRQKRSLEASIKYTILSAAASSFLLFGMALVYAQSGNLSFEALGKSLGDGMLHEPLLLAGFGLMIVGLGFKLSLVPFHLWTPDVYQGAPAPVSTFLATASKIAIFGVVMRLFLYAPVGDSEAVRVVLGIIAFASIIFGNLMALSQTNIKRLLGYSSISHLGYLLVALIALQSGEMSMEAVGVYLAGYLFSSLGAFGVVSLMSSPFRGPDADSLYSYRGLFWHRPVLAAVMTVMMLSLAGIPMTLGFIGKFYVLAVGVQASLWWLVAAVVVGSAIGLYYYLRVAVSLYLHAPQQPGRDAPTNWQYSAGGIVVLISALLVLVLGVWPQPLISLVQLAMPLM.

Helical transmembrane passes span 8-28, 35-55, 71-91, 105-125, 127-147, 159-179, 203-223, 235-255, 271-291, 297-317, 326-346, 373-393, 408-430, and 455-475; these read LIAL…MLSI, FLNA…LWFV, GFAM…CTFA, FYLL…ANHL, ALFL…GYAF, YTIL…LVYA, LLAG…LVPF, PAPV…GVVM, VVLG…ALSQ, LLGY…IALQ, VGVY…VVSL, AAVM…LGFI, WWLV…RVAV, and IVVL…QPLI.

Belongs to the complex I subunit 2 family. In terms of assembly, NDH-1 is composed of 13 different subunits. Subunits NuoA, H, J, K, L, M, N constitute the membrane sector of the complex.

The protein localises to the cell inner membrane. The catalysed reaction is a quinone + NADH + 5 H(+)(in) = a quinol + NAD(+) + 4 H(+)(out). Functionally, NDH-1 shuttles electrons from NADH, via FMN and iron-sulfur (Fe-S) centers, to quinones in the respiratory chain. The immediate electron acceptor for the enzyme in this species is believed to be ubiquinone. Couples the redox reaction to proton translocation (for every two electrons transferred, four hydrogen ions are translocated across the cytoplasmic membrane), and thus conserves the redox energy in a proton gradient. The sequence is that of NADH-quinone oxidoreductase subunit N from Salmonella gallinarum (strain 287/91 / NCTC 13346).